Consider the following 282-residue polypeptide: Complement component 1 Q subcomponent-binding protein, mitochondrial (282 aa).

The transit peptide at 1 to 73 directs the protein to the mitochondrion; it reads MLPLLRCVPR…PCACGCGCGS (73 aa). A C1q binding region spans residues 76 to 93; it reads TDGDKAFVDFLSDEIKEE. Position 87 is a phosphoserine (serine 87). Residue lysine 91 is modified to N6-acetyllysine. The tract at residues 138-164 is disordered; the sequence is SIPPTFDGEEEPSQGQKVEEQEPELTS. The interval 168 to 213 is interaction with MAVS; it reads FVVEVIKNDDGKKALVLDCHYPEDEVGQEDEAESDIFSIREVSFQS. At tyrosine 188 the chain carries Phosphotyrosine. 2 positions are modified to phosphoserine: serine 201 and serine 205. Position 214 is a phosphothreonine (threonine 214).

This sequence belongs to the MAM33 family. In terms of assembly, homotrimer; three monomers form a donut-shaped structure with an unusually asymmetric charge distribution on the surface. Interacts with CDK13, HRK, VTN, NFYB, ADRA1B, FOXC1, DDX21, DDX50, NCL, SRSF1, SRSF9 and CDKN2A isoform smARF. Interacts with CD93; the association may represent a cell surface C1q receptor. Interacts with KRT1; the association represents a cell surface kininogen receptor. Interacts with CD209; the interaction is indicative for a C1q:C1QBP:CD209 signaling complex. Interacts with FBL and RRP1; the respective interactions with C1QBP are competitive. Probably associates with the mitoribosome. Interacts with MAVS; the interaction occurs upon viral transfection. Interacts with PPIF. Interacts with U2AF1L4. Interacts with PLEKHN1. Interacts with VGF-derived peptide TLQP-21. Interacts with POLGARF which is produced from an alternative reading frame of the POLG gene; the interaction results in nucleolar localization of C1QBP, probably due to prevention of C1QBP maturation and redirection from mitochondria to nucleoli. Interacts with MRE11 and RAD50; forming the MRC (MRE11-RAD50-C1QBP) complex that inhibits the activity of MRE11. (Microbial infection) Interacts with Rubella virus capsid protein; the interaction occurs in mitochondria. Interacts with Rubella virus protease/methyltransferase p150. As to quaternary structure, (Microbial infection) Interacts with Staphylococcus aureus protein A/spa. In terms of assembly, (Microbial infection) Interacts with Staphylococcus aureus protein A/spa, HIV-1 Tat and HCV core protein. (Microbial infection) Interacts with HIV-1 Tat and HCV core protein. As to quaternary structure, (Microbial infection) Interacts with L.monocytogenes internalin B. In terms of assembly, (Microbial infection) Interacts with Epstein-Barr virus EBNA1. Expressed on cell surface of peripheral blood cells (at protein level); Surface expression is reported for macrophages and monocyte-derived dendritic cells.

It localises to the mitochondrion matrix. It is found in the nucleus. The protein localises to the nucleolus. The protein resides in the cell membrane. Its subcellular location is the secreted. It localises to the cytoplasm. Its function is as follows. Multifunctional and multicompartmental protein involved in inflammation and infection processes, ribosome biogenesis, protein synthesis in mitochondria, regulation of apoptosis, transcriptional regulation and pre-mRNA splicing. At the cell surface is thought to act as an endothelial receptor for plasma proteins of the complement and kallikrein-kinin cascades. Putative receptor for C1q; specifically binds to the globular 'heads' of C1q thus inhibiting C1; may perform the receptor function through a complex with C1qR/CD93. In complex with cytokeratin-1/KRT1 is a high affinity receptor for kininogen-1/HMWK. Can also bind other plasma proteins, such as coagulation factor XII leading to its autoactivation. May function to bind initially fluid kininogen-1 to the cell membrane. The secreted form may enhance both extrinsic and intrinsic coagulation pathways. It is postulated that the cell surface form requires docking with transmembrane proteins for downstream signaling which might be specific for a cell-type or response. By acting as C1q receptor is involved in chemotaxis of immature dendritic cells and neutrophils and is proposed to signal through CD209/DC-SIGN on immature dendritic cells, through integrin alpha-4/beta-1 during trophoblast invasion of the decidua, and through integrin beta-1 during endothelial cell adhesion and spreading. Signaling involved in inhibition of innate immune response is implicating the PI3K-AKT/PKB pathway. Required for protein synthesis in mitochondria. In mitochondrial translation may be involved in formation of functional 55S mitoribosomes; the function seems to involve its RNA-binding activity. Acts as a RNA modification reader, which specifically recognizes and binds mitochondrial RNAs modified by C5-methylcytosine (m5C) in response to stress, and promotes recruitment of the mitochondrial degradosome complex, leading to their degradation. May be involved in the nucleolar ribosome maturation process; the function may involve the exchange of FBL for RRP1 in the association with pre-ribosome particles. Involved in regulation of RNA splicing by inhibiting the RNA-binding capacity of SRSF1 and its phosphorylation. Is required for the nuclear translocation of splicing factor U2AF1L4. Involved in regulation of CDKN2A- and HRK-mediated apoptosis. Stabilizes mitochondrial CDKN2A isoform smARF. May be involved in regulation of FOXC1 transcriptional activity and NFY/CCAAT-binding factor complex-mediated transcription. May play a role in antibacterial defense as it can bind to cell surface hyaluronan and inhibit Streptococcus pneumoniae hyaluronate lyase. May be involved in modulation of the immune response; ligation by HCV core protein is resulting in suppression of interleukin-12 production in monocyte-derived dendritic cells. Involved in regulation of antiviral response by inhibiting RIGI- and IFIH1-mediated signaling pathways probably involving its association with MAVS after viral infection. Acts as a regulator of DNA repair via homologous recombination by inhibiting the activity of MRE11: interacts with unphosphorylated MRE11 and RAD50 in absence of DNA damage, preventing formation and activity of the MRN complex. Following DNA damage, dissociates from phosphorylated MRE11, allowing formation of the MRN complex. In terms of biological role, (Microbial infection) Involved in HIV-1 replication, presumably by contributing to splicing of viral RNA. (Microbial infection) In infection processes acts as an attachment site for microbial proteins, including Listeria monocytogenes internalin B (InlB) and Staphylococcus aureus protein A. Functionally, (Microbial infection) Involved in replication of Rubella virus. This is Complement component 1 Q subcomponent-binding protein, mitochondrial (C1QBP) from Homo sapiens (Human).